A 351-amino-acid polypeptide reads, in one-letter code: Phosphatidylinositol transfer protein PDR16 (351 aa).

One can recognise a CRAL-TRIO domain in the interval 135-295 (LVAVENESGK…LYGGDLKFKY (161 aa)).

Homodimer. Apo-SFH3 forms a dimer through the hydrophobic interaction of gating helices. Binding of phosphatidylinositol leads to dissociation of the dimer into monomers in a reversible manner.

Its subcellular location is the lipid droplet. The protein localises to the microsome membrane. It is found in the endoplasmic reticulum membrane. It catalyses the reaction a 1,2-diacyl-sn-glycero-3-phospho-(1D-myo-inositol)(in) = a 1,2-diacyl-sn-glycero-3-phospho-(1D-myo-inositol)(out). In terms of biological role, has phosphatidylinositol transfer activity. Involved in the regulation of the phospholipid composition of plasma- and endomembranes. Altering plasma membrane composition may provide a possible mechanism for multidrug resistance. Involved in the regulation of sterol biosynthesis. Contributes to efficient phospholipase D1 activation in the regulation of phospholipid turnover. Regulates the release of fatty acids from lipid droplets. The protein is Phosphatidylinositol transfer protein PDR16 (PDR16) of Saccharomyces cerevisiae (strain ATCC 204508 / S288c) (Baker's yeast).